The following is a 205-amino-acid chain: Proteasome subunit beta type-3 (205 aa).

It belongs to the peptidase T1B family. As to quaternary structure, the 26S proteasome consists of a 20S proteasome core and two 19S regulatory subunits. The 20S proteasome core is composed of 28 subunits that are arranged in four stacked rings, resulting in a barrel-shaped structure. The two end rings are each formed by seven alpha subunits, and the two central rings are each formed by seven beta subunits. The catalytic chamber with the active sites is on the inside of the barrel.

The protein localises to the cytoplasm. It localises to the nucleus. Its function is as follows. Non-catalytic component of the proteasome, a multicatalytic proteinase complex which is characterized by its ability to cleave peptides with Arg, Phe, Tyr, Leu, and Glu adjacent to the leaving group at neutral or slightly basic pH. The proteasome has an ATP-dependent proteolytic activity. The protein is Proteasome subunit beta type-3 (PSB3) of Trypanosoma brucei brucei.